The primary structure comprises 410 residues: Beta-arrestin-2 (410 aa).

Position 48 is a phosphotyrosine (Tyr48). Residues Pro176 and Pro181 each carry the hydroxyproline; by PHD2 modification. The interaction with TRAF6 stretch occupies residues 241-410 (ADICLFSTAQ…KDDDCDDQFC (170 aa)). At Ser361 the chain carries Phosphoserine. Residues 378–410 (DTNYATDDDIVFEDFARLRLKGMKDDDCDDQFC) form an interaction with AP2B1 region. Thr383 is modified (phosphothreonine; by CaMK2). The short motif at 386–396 (DIVFEDFARLR) is the [DE]-X(1,2)-F-X-X-[FL]-X-X-X-R motif element.

It belongs to the arrestin family. In terms of assembly, homooligomer; the self-association is mediated by InsP6-binding. Heterooligomer with ARRB1; the association is mediated by InsP6-binding. Interacts with ADRB2 and CHRM2. Interacts with PDE4A. Interacts with PDE4D. Interacts with MAPK10, MAPK1 and MAPK3. Interacts with DRD2. Interacts with FSHR. Interacts with CLTC. Interacts with HTR2C. Interacts with CCR5. Interacts with CXCR4. Interacts with SRC. Interacts with DUSP16; the interaction is interrupted by stimulation of AGTR1 and activation of MAPK10. Interacts with CHUK; the interaction is enhanced stimulation of ADRB2. Interacts with RELA. Interacts with MDM2; the interaction is enhanced by activation of GPCRs. Interacts with SLC9A5. Interacts with TRAF6. Interacts with IGF1R. Interacts with ENG. Interacts with KIR2DL1, KIR2DL3 and KIR2DL4. Interacts with LDLR. Interacts with AP2B1. Interacts with C5AR1. Interacts with RAF1. Interacts with MAP2K1. Interacts with MAPK1. Interacts with MAPK10; the interaction enhances MAPK10 activation by MAP3K5. Interacts with MAP2K4; the interaction is enhanced by presence of MAP3K5 and MAPK10. Interacts with MAP3K5. Interacts with AKT1. Interacts with IKBKB and MAP3K14. Interacts with SMO (activated). Interacts with GSK3A and GSK3B. Associates with protein phosphatase 2A (PP2A). Interacts with CXCR4; the interaction is dependent on C-terminal phosphorylation of CXCR4 and allows activation of MAPK1 and MAPK3. Interacts with GPR143. Interacts with HCK and CXCR1 (phosphorylated). Interacts with ACKR3 and ACKR4. Interacts with ARRDC1; the interaction is direct. Interacts with GPR61, GPR62 and GPR135. Interacts (via NACHT and LRR domains) with NLRP3; this interaction is direct and inducible by omega-3 polyunsaturated fatty acids (PUFAs). Interacts with FFAR4 (via C-terminus); this interaction is stimulated by long-chain fatty acids (LCFAs). Interacts with GPR35. Interacts with GPR84. Interacts with TIGIT; this interaction inhibits the NF-kappa-B pathway. Interacts with TGFBR3. Phosphorylated at Thr-383 in the cytoplasm; probably dephosphorylated at the plasma membrane. The phosphorylation does not regulate internalization and recycling of ADRB2, interaction with clathrin or AP2B1. In terms of processing, the ubiquitination status appears to regulate the formation and trafficking of beta-arrestin-GPCR complexes and signaling. Ubiquitination appears to occur GPCR-specific. Ubiquitinated by MDM2; the ubiquitination is required for rapid internalization of ADRB2. Deubiquitinated by USP33; the deubiquitination leads to a dissociation of the beta-arrestin-GPCR complex. Stimulation of a class A GPCR, such as ADRB2, induces transient ubiquitination and subsequently promotes association with USP33. Stimulation of a class B GPCR promotes a sustained ubiquitination. Deubiquitinated by USP20; allowing USP20 to deubiquitinate TRAF6 leading to inhibition of NF-kappa-B signaling. Post-translationally, hydroxylation by PHD2 modulates the rate of internalization by slowing down recruitment to the plasma membrane and inhibiting subsequent co-internalization with class A receptors. In terms of tissue distribution, predominantly localized in neuronal tissues and in the spleen.

The protein localises to the cytoplasm. The protein resides in the nucleus. It localises to the cell membrane. It is found in the membrane. Its subcellular location is the clathrin-coated pit. The protein localises to the cytoplasmic vesicle. Functions in regulating agonist-mediated G-protein coupled receptor (GPCR) signaling by mediating both receptor desensitization and resensitization processes. During homologous desensitization, beta-arrestins bind to the GPRK-phosphorylated receptor and sterically preclude its coupling to the cognate G-protein; the binding appears to require additional receptor determinants exposed only in the active receptor conformation. The beta-arrestins target many receptors for internalization by acting as endocytic adapters (CLASPs, clathrin-associated sorting proteins) and recruiting the GPRCs to the adapter protein 2 complex 2 (AP-2) in clathrin-coated pits (CCPs). However, the extent of beta-arrestin involvement appears to vary significantly depending on the receptor, agonist and cell type. Internalized arrestin-receptor complexes traffic to intracellular endosomes, where they remain uncoupled from G-proteins. Two different modes of arrestin-mediated internalization occur. Class A receptors, like ADRB2, OPRM1, ENDRA, D1AR and ADRA1B dissociate from beta-arrestin at or near the plasma membrane and undergo rapid recycling. Class B receptors, like AVPR2, AGTR1, NTSR1, TRHR and TACR1 internalize as a complex with arrestin and traffic with it to endosomal vesicles, presumably as desensitized receptors, for extended periods of time. Receptor resensitization then requires that receptor-bound arrestin is removed so that the receptor can be dephosphorylated and returned to the plasma membrane. Mediates endocytosis of CCR7 following ligation of CCL19 but not CCL21. Involved in internalization of P2RY1, P2RY4, P2RY6 and P2RY11 and ATP-stimulated internalization of P2RY2. Involved in phosphorylation-dependent internalization of OPRD1 and subsequent recycling or degradation. Involved in ubiquitination of IGF1R. Beta-arrestins function as multivalent adapter proteins that can switch the GPCR from a G-protein signaling mode that transmits short-lived signals from the plasma membrane via small molecule second messengers and ion channels to a beta-arrestin signaling mode that transmits a distinct set of signals that are initiated as the receptor internalizes and transits the intracellular compartment. Acts as a signaling scaffold for MAPK pathways such as MAPK1/3 (ERK1/2) and MAPK10 (JNK3). ERK1/2 and JNK3 activated by the beta-arrestin scaffold are largely excluded from the nucleus and confined to cytoplasmic locations such as endocytic vesicles, also called beta-arrestin signalosomes. Acts as a signaling scaffold for the AKT1 pathway. GPCRs for which the beta-arrestin-mediated signaling relies on both ARRB1 and ARRB2 (codependent regulation) include ADRB2, F2RL1 and PTH1R. For some GPCRs the beta-arrestin-mediated signaling relies on either ARRB1 or ARRB2 and is inhibited by the other respective beta-arrestin form (reciprocal regulation). Increases ERK1/2 signaling in AGTR1- and AVPR2-mediated activation (reciprocal regulation). Involved in CCR7-mediated ERK1/2 signaling involving ligand CCL19. Is involved in type-1A angiotensin II receptor/AGTR1-mediated ERK activity. Is involved in type-1A angiotensin II receptor/AGTR1-mediated MAPK10 activity. Is involved in dopamine-stimulated AKT1 activity in the striatum by disrupting the association of AKT1 with its negative regulator PP2A. Involved in AGTR1-mediated chemotaxis. Appears to function as signaling scaffold involved in regulation of MIP-1-beta-stimulated CCR5-dependent chemotaxis. Involved in attenuation of NF-kappa-B-dependent transcription in response to GPCR or cytokine stimulation by interacting with and stabilizing CHUK. Suppresses UV-induced NF-kappa-B-dependent activation by interacting with CHUK. The function is promoted by stimulation of ADRB2 and dephosphorylation of ARRB2. Involved in IL8-mediated granule release in neutrophils. Involved in p53/TP53-mediated apoptosis by regulating MDM2 and reducing the MDM2-mediated degradation of p53/TP53. May serve as nuclear messenger for GPCRs. Upon stimulation of OR1D2, may be involved in regulation of gene expression during the early processes of fertilization. Also involved in regulation of receptors other than GPCRs. Involved in endocytosis of TGFBR2 and TGFBR3 and down-regulates TGF-beta signaling such as NF-kappa-B activation. Involved in endocytosis of low-density lipoprotein receptor/LDLR. Involved in endocytosis of smoothened homolog/Smo, which also requires GRK2. Involved in endocytosis of SLC9A5. Involved in endocytosis of ENG and subsequent TGF-beta-mediated ERK activation and migration of epithelial cells. Involved in Toll-like receptor and IL-1 receptor signaling through the interaction with TRAF6 which prevents TRAF6 autoubiquitination and oligomerization required for activation of NF-kappa-B and JUN. Involved in insulin resistance by acting as insulin-induced signaling scaffold for SRC, AKT1 and INSR. Involved in regulation of inhibitory signaling of natural killer cells by recruiting PTPN6 and PTPN11 to KIR2DL1. Involved in the internalization of the atypical chemokine receptor ACKR3. Acts as an adapter protein coupling FFAR4 receptor to specific downstream signaling pathways, as well as mediating receptor endocytosis. During the activation step of NLRP3 inflammasome, directly associates with NLRP3 leading to inhibition of pro-inflammatory cytokine release and inhibition of inflammation. This Rattus norvegicus (Rat) protein is Beta-arrestin-2 (Arrb2).